Consider the following 197-residue polypeptide: Imidazoleglycerol-phosphate dehydratase (197 aa).

It belongs to the imidazoleglycerol-phosphate dehydratase family.

Its subcellular location is the cytoplasm. The enzyme catalyses D-erythro-1-(imidazol-4-yl)glycerol 3-phosphate = 3-(imidazol-4-yl)-2-oxopropyl phosphate + H2O. Its pathway is amino-acid biosynthesis; L-histidine biosynthesis; L-histidine from 5-phospho-alpha-D-ribose 1-diphosphate: step 6/9. The polypeptide is Imidazoleglycerol-phosphate dehydratase (hisB) (Streptomyces coelicolor (strain ATCC BAA-471 / A3(2) / M145)).